Consider the following 232-residue polypeptide: Orotidine 5'-phosphate decarboxylase (232 aa).

Residues Asp11, Lys33, 60 to 69, Thr119, Arg180, Gln189, Gly209, and Arg210 each bind substrate; that span reads DLKLYDIPNT. Lys62 functions as the Proton donor in the catalytic mechanism.

Belongs to the OMP decarboxylase family. Type 1 subfamily. Homodimer.

The catalysed reaction is orotidine 5'-phosphate + H(+) = UMP + CO2. It participates in pyrimidine metabolism; UMP biosynthesis via de novo pathway; UMP from orotate: step 2/2. Functionally, catalyzes the decarboxylation of orotidine 5'-monophosphate (OMP) to uridine 5'-monophosphate (UMP). The chain is Orotidine 5'-phosphate decarboxylase from Wigglesworthia glossinidia brevipalpis.